Reading from the N-terminus, the 411-residue chain is Peptidase T (411 aa).

His-79 contacts Zn(2+). Asp-81 is an active-site residue. Asp-142 is a binding site for Zn(2+). Glu-176 acts as the Proton acceptor in catalysis. The Zn(2+) site is built by Glu-177, Asp-199, and His-381.

This sequence belongs to the peptidase M20B family. Requires Zn(2+) as cofactor.

It is found in the cytoplasm. It carries out the reaction Release of the N-terminal residue from a tripeptide.. In terms of biological role, cleaves the N-terminal amino acid of tripeptides. The protein is Peptidase T of Geobacillus kaustophilus (strain HTA426).